The chain runs to 533 residues: Probable RNA-binding protein 46 (533 aa).

3 RRM domains span residues 61–139, 141–223, and 236–308; these read CEVF…VSLD, CRLF…WADP, and KVLY…LAKP.

Interacts with YTHDC2, MEIOC, MOV10, CNOT6L, DDX4, UPF1 and PABPC1.

The protein localises to the cytoplasm. Functionally, essential for male and female fertility, playing a crucial role in regulating germ cell development by ensuring the proper progression of meiosis prophase I. Regulates mitotic-to-meiotic transition in spermatogenesis by forming a complex with MEIOC and YTHDC2 which recognizes and down-regulates mitotic transcripts for a successful meiotic entry. Required for normal synaptonemal complex formation during meiosis, binding meiotic cohesin subunit mRNAs containing GCCUAU/GUUCGA motifs in their 3'UTRs regions and positively regulating their translation. Required for spermatogonial differentiation in both developing and adult testis. The chain is Probable RNA-binding protein 46 (RBM46) from Homo sapiens (Human).